A 322-amino-acid polypeptide reads, in one-letter code: Aldo-keto reductase family 1 member C23 (322 aa).

G20–Y24 contributes to the NADP(+) binding site. K31 lines the substrate pocket. D50 is a binding site for NADP(+). Y55 acts as the Proton donor in catalysis. H117 provides a ligand contact to substrate. NADP(+)-binding positions include S166–N167, Q190, Y216–S221, and K269–N279.

The protein belongs to the aldo/keto reductase family. Monomer. In terms of tissue distribution, detected in follicle granulosa cells (at protein level). Detected in heart, lung, liver, kidney, stomach, uterus, testis, skeletal muscle and granulosa cells of the follicle wall.

The protein resides in the cytoplasm. Functionally, NADP-dependent oxidoreductase that has 20-alpha-hydroxysteroid dehydrogenase activity. This chain is Aldo-keto reductase family 1 member C23 (AKR1C23), found in Equus caballus (Horse).